A 345-amino-acid polypeptide reads, in one-letter code: Pectin lyase (345 aa).

The N-terminal stretch at 1-24 is a signal peptide; that stretch reads MKRFCLWFAVFSLLLVLLPGKAFG. Arginine 234 is a catalytic residue.

This sequence belongs to the polysaccharide lyase 1 family.

It is found in the secreted. The enzyme catalyses Eliminative cleavage of (1-&gt;4)-alpha-D-galacturonan methyl ester to give oligosaccharides with 4-deoxy-6-O-methyl-alpha-D-galact-4-enuronosyl groups at their non-reducing ends.. Its activity is regulated as follows. Inhibited by Hg(2+) and Mn(2+). Not affected by EDTA in vitro. Catalyzes the depolymerization of pectins of methyl esterification degree from 13 to 75%, with an endo mode of action. Cannot degrade polygalacturonate. Also displays protopectinase activity, i.e. releases pectin from protopectin. The chain is Pectin lyase (pelB) from Bacillus subtilis.